The sequence spans 316 residues: HPr kinase/phosphorylase (316 aa).

Catalysis depends on residues histidine 143 and lysine 164. 158 to 165 (GEAGSGKS) contributes to the ATP binding site. Position 165 (serine 165) interacts with Mg(2+). The Proton acceptor; for phosphorylation activity. Proton donor; for dephosphorylation activity role is filled by aspartate 182. Residues 206–215 (LEVRGLGVLN) are important for the catalytic mechanism of both phosphorylation and dephosphorylation. Glutamate 207 lines the Mg(2+) pocket. Arginine 251 is an active-site residue. The tract at residues 272–277 (PVMPGR) is important for the catalytic mechanism of dephosphorylation.

It belongs to the HPrK/P family. In terms of assembly, homohexamer. Mg(2+) serves as cofactor.

It carries out the reaction [HPr protein]-L-serine + ATP = [HPr protein]-O-phospho-L-serine + ADP + H(+). The enzyme catalyses [HPr protein]-O-phospho-L-serine + phosphate + H(+) = [HPr protein]-L-serine + diphosphate. Functionally, catalyzes the ATP- as well as the pyrophosphate-dependent phosphorylation of a specific serine residue in HPr, a phosphocarrier protein of the phosphoenolpyruvate-dependent sugar phosphotransferase system (PTS). HprK/P also catalyzes the pyrophosphate-producing, inorganic phosphate-dependent dephosphorylation (phosphorolysis) of seryl-phosphorylated HPr (P-Ser-HPr). This is HPr kinase/phosphorylase from Stenotrophomonas maltophilia (strain R551-3).